We begin with the raw amino-acid sequence, 473 residues long: Cardiolipin synthase C (473 aa).

PLD phosphodiesterase domains are found at residues 125–152 and 364–391; these read LNRR…GDAY and SGAS…DPRS. Catalysis depends on residues H130, K132, D137, H369, K371, and D376.

It belongs to the phospholipase D family. Cardiolipin synthase subfamily. ClsC sub-subfamily.

The catalysed reaction is a 1,2-diacyl-sn-glycero-3-phospho-(1'-sn-glycerol) + a 1,2-diacyl-sn-glycero-3-phosphoethanolamine = a cardiolipin + ethanolamine. Its activity is regulated as follows. Full activity requires coexpression with the neighboring gene ymdB. Functionally, catalyzes the synthesis of cardiolipin (CL) (diphosphatidylglycerol) from phosphatidylglycerol (PG) and phosphatidylethanolamine (PE). The sequence is that of Cardiolipin synthase C from Escherichia coli (strain K12).